A 416-amino-acid polypeptide reads, in one-letter code: Phosphoglycerate kinase (416 aa).

The residue at position 2 (serine 2) is an N-acetylserine. Residues valine 23, aspartate 24, phenylalanine 25, asparagine 26, glutamine 38, arginine 39, serine 62, histidine 63, glycine 65, and arginine 66 each contribute to the (2R)-3-phosphoglycerate site. Lysine 82 participates in a covalent cross-link: Glycyl lysine isopeptide (Lys-Gly) (interchain with G-Cter in ubiquitin). Threonine 93 is modified (phosphothreonine). Serine 110 is subject to Phosphoserine. Residues leucine 121 and arginine 122 each coordinate (2R)-3-phosphoglycerate. Residues serine 130 and serine 154 each carry the phosphoserine modification. Residues histidine 168 and arginine 169 each contribute to the (2R)-3-phosphoglycerate site. Serine 172 is subject to Phosphoserine. Residue lysine 197 forms a Glycyl lysine isopeptide (Lys-Gly) (interchain with G-Cter in ubiquitin) linkage. Phosphothreonine is present on threonine 203. ADP is bound at residue glycine 212. CDP is bound at residue glycine 212. The AMP site is built by alanine 213 and lysine 214. 2 residues coordinate ATP: alanine 213 and lysine 214. Residue alanine 213 participates in Mg(2+) binding. Alanine 216 and aspartate 217 together coordinate Mg(2+). Residue aspartate 217 participates in CDP binding. An AMP-binding site is contributed by lysine 218. Lysine 218 provides a ligand contact to ATP. Glycine 236 is a binding site for ADP. Glycine 236 contributes to the CDP binding site. Position 237 (glycine 237) interacts with AMP. Glycine 237 serves as a coordination point for ATP. Threonine 241 carries the phosphothreonine modification. Residues lysine 258 and lysine 274 each participate in a glycyl lysine isopeptide (Lys-Gly) (interchain with G-Cter in ubiquitin) cross-link. At threonine 298 the chain carries Phosphothreonine. Residue lysine 302 forms a Glycyl lysine isopeptide (Lys-Gly) (interchain with G-Cter in ubiquitin) linkage. Glycine 311 contributes to the AMP binding site. Residues glycine 311 and leucine 312 each coordinate ATP. Serine 318 is modified (phosphoserine). Residue threonine 331 is modified to Phosphothreonine. An ATP-binding site is contributed by asparagine 335. CDP is bound by residues glycine 336 and phenylalanine 341. Phenylalanine 341 provides a ligand contact to ADP. Residue glutamate 342 participates in AMP binding. Glutamate 342 contributes to the ATP binding site. Glycine 371 contacts (2R)-3-phosphoglycerate. Residues aspartate 373 and threonine 374 each coordinate ATP. Aspartate 373 provides a ligand contact to Mg(2+). Threonine 392 carries the phosphothreonine modification. (2R)-3-phosphoglycerate-binding residues include glycine 394 and glycine 395.

Belongs to the phosphoglycerate kinase family. In terms of assembly, monomer. Mg(2+) serves as cofactor.

The protein resides in the cytoplasm. The protein localises to the mitochondrion. The catalysed reaction is (2R)-3-phosphoglycerate + ATP = (2R)-3-phospho-glyceroyl phosphate + ADP. The protein operates within carbohydrate degradation; glycolysis; pyruvate from D-glyceraldehyde 3-phosphate: step 2/5. In terms of biological role, catalyzes one of the two ATP producing reactions in the glycolytic pathway via the reversible conversion of 1,3-diphosphoglycerate to 3-phosphoglycerate. Both L- and D- forms of purine and pyrimidine nucleotides can be used as substrates, but the activity is much lower on pyrimidines. Negatively regulates the biosynthesis of acetyl-CoA from pyruvate in the mitochondrion. This is Phosphoglycerate kinase (PGK1) from Saccharomyces cerevisiae (strain ATCC 204508 / S288c) (Baker's yeast).